Consider the following 247-residue polypeptide: tRNA pseudouridine synthase A (247 aa).

The Nucleophile role is filled by Asp52. Tyr113 contributes to the substrate binding site.

The protein belongs to the tRNA pseudouridine synthase TruA family. In terms of assembly, homodimer.

The catalysed reaction is uridine(38/39/40) in tRNA = pseudouridine(38/39/40) in tRNA. Formation of pseudouridine at positions 38, 39 and 40 in the anticodon stem and loop of transfer RNAs. This is tRNA pseudouridine synthase A from Bartonella tribocorum (strain CIP 105476 / IBS 506).